Consider the following 312-residue polypeptide: Olfactory receptor 2L5 (312 aa).

Topologically, residues 1 to 24 (MENYNQTSTDFILLGLFPPSKIGL) are extracellular. N-linked (GlcNAc...) asparagine glycosylation is present at asparagine 5. A helical membrane pass occupies residues 25-48 (FLFILFVLIFLMALIGNLSMILLI). At 49–56 (FLDTHLHT) the chain is on the cytoplasmic side. The helical transmembrane segment at 57–78 (PMYFLLSQLSLIDLNYISTIVP) threads the bilayer. The Extracellular segment spans residues 79–99 (KMASDFLYGNKSISFIGCGIQ). Cysteine 96 and cysteine 188 form a disulfide bridge. The helical transmembrane segment at 100–119 (SFFFMTFAGAEALLLTSMAY) threads the bilayer. At 120 to 138 (DRYVAICFPLHYPIRMSKR) the chain is on the cytoplasmic side. The chain crosses the membrane as a helical span at residues 139–157 (MYVLMITGSWMIGSINSCA). Residues 158–194 (HTVYAFRIPYCKSRAINHFFCDVPAMLTLACTDTWVY) are Extracellular-facing. Residues 195–218 (EYTVFLSSTIFLVFPFTGIACSYG) form a helical membrane-spanning segment. At 219 to 235 (WVLLAVYRMHSAEGRKK) the chain is on the cytoplasmic side. The chain crosses the membrane as a helical span at residues 236–258 (AYSTCSTHLTVVTFYYAPFAYTY). The Extracellular portion of the chain corresponds to 259–271 (LCPRSLRSLTEDK). Residues 272-291 (VLAVFYTILTPMLNPIIYSL) traverse the membrane as a helical segment. The Cytoplasmic segment spans residues 292 to 312 (RNKEVMGALTRVIQNIFSVKM).

It belongs to the G-protein coupled receptor 1 family.

The protein resides in the cell membrane. Its function is as follows. Odorant receptor. This is Olfactory receptor 2L5 (OR2L5) from Homo sapiens (Human).